A 205-amino-acid polypeptide reads, in one-letter code: Outer-membrane lipoprotein LolB (205 aa).

The first 17 residues, 1–17, serve as a signal peptide directing secretion; the sequence is MFLRHVIVFSLIALLTG. Residue C18 is the site of N-palmitoyl cysteine attachment. C18 carries the S-diacylglycerol cysteine lipid modification.

Belongs to the LolB family. As to quaternary structure, monomer.

The protein resides in the cell outer membrane. Its function is as follows. Plays a critical role in the incorporation of lipoproteins in the outer membrane after they are released by the LolA protein. The sequence is that of Outer-membrane lipoprotein LolB from Pseudomonas syringae pv. syringae (strain B728a).